Consider the following 313-residue polypeptide: MEFQHKPVLLEETISNLAIKPDGVYIDGTVGGAGHSGEILKRLDESGTLIGLDQDEFAIKTSQEKLVQINSKAKIILVNTNFVNIKEVCQKNNIESVDGILLDLGVSSHQLDEASRGFSYNKDAPLDMRMDRRGELTAKKIVNEYGREEIKRIIRDYGEEKWASRIAEFIVEARKKKEIETTGELVDIIKAAIPSSARRGGPHPAKRTFQALRIAVNNELGILAKTIEDGTELLKPGGRFCIITFHSLEDRIVKDEFNKKVNPCICPKQFPVCTCGRKPEGVLVNRKPIVPKEKELEENPRARSAKLRVLEKI.

Residues 33 to 35, D53, F82, D103, and Q110 each bind S-adenosyl-L-methionine; that span reads AGH.

Belongs to the methyltransferase superfamily. RsmH family.

The protein localises to the cytoplasm. It carries out the reaction cytidine(1402) in 16S rRNA + S-adenosyl-L-methionine = N(4)-methylcytidine(1402) in 16S rRNA + S-adenosyl-L-homocysteine + H(+). Specifically methylates the N4 position of cytidine in position 1402 (C1402) of 16S rRNA. The sequence is that of Ribosomal RNA small subunit methyltransferase H from Acetivibrio thermocellus (strain ATCC 27405 / DSM 1237 / JCM 9322 / NBRC 103400 / NCIMB 10682 / NRRL B-4536 / VPI 7372) (Clostridium thermocellum).